The sequence spans 1473 residues: NACHT, LRR and PYD domains-containing protein 1 (1473 aa).

In terms of domain architecture, Pyrin spans 1-92 (MAGGAWGRLA…CAQAQEGAGH (92 aa)). The interval 90–113 (AGHSPSFPYSPSEPHLGSPSQPTS) is disordered. A phosphoserine; by MAPK11 and MAPK14 mark is found at Ser-93, Ser-99, and Ser-101. Ser-107 carries the post-translational modification Phosphoserine; by MAPK14. Residues 111 to 117 (PTSTAVL) carry the ZAKalpha motif 1 motif. Thr-112 carries the phosphothreonine; by MAPK11, MAPK14 and MAP3K20 modification. Ser-113 is subject to Phosphoserine; by MAP3K20. Phosphothreonine; by MAP3K20 is present on residues Thr-114 and Thr-129. Phosphoserine; by MAP3K20 is present on Ser-132. Residues 160-254 (LPSSPDHESP…HTSLQPHHHP (95 aa)) are disordered. Ser-163 bears the Phosphoserine; by MAPK14 mark. The residue at position 168 (Ser-168) is a Phosphoserine; by MAPK11 and MAPk14. Ser-170 is subject to Phosphoserine; by MAPK11 and MAPK14. Positions 170-182 (SQESPNAPTSTAV) are enriched in polar residues. A Phosphoserine; by MAPK11 modification is found at Ser-173. The short motif at 177–183 (PTSTAVL) is the ZAKalpha motif 2 element. Thr-178 is subject to Phosphothreonine; by MAPK11. Ser-179 is subject to Phosphoserine; by MAPK11 and MAP3K20. A Phosphothreonine; by MAPK11 and MAP3K20 modification is found at Thr-180. The span at 218–231 (EIREREREKSEKGR) shows a compositional bias: basic and acidic residues. The region spanning 328-637 (RIVILQGAAG…EFFAAMSYVL (310 aa)) is the NACHT domain. 334–341 (GAAGIGKS) contributes to the ATP binding site. LRR repeat units follow at residues 809–830 (NLKELDLSGNSLSHSAVKSLCK), 838–858 (LLETLRLAGCGLTAEDCKDLA), 866–887 (TLTELDLSFNVLTDAGAKHLCQ), 895–915 (KLQRLQLVSCGLTSDCCQDLA), 923–944 (SLKELDLQQNNLDDVGVRLLCE), and 950–973 (ACKLIRLGLDQTTLSDEMRQELRA). The interval 991-1017 (VMTPTEGLDTGEMSNSTSSLKRQRLGS) is disordered. A ZU5 region spans residues 1079 to 1212 (FWGPTGPVAT…HHIVLENPSF (134 aa)). One can recognise an FIIND domain in the interval 1079 to 1364 (FWGPTGPVAT…LMPATTLIPP (286 aa)). Residues 1213-1364 (SPLGVLLKMI…LMPATTLIPP (152 aa)) are UPA. The 90-residue stretch at 1374 to 1463 (DAPQLLHFVD…HLIMELWEKG (90 aa)) folds into the CARD domain.

The protein belongs to the NLRP family. As to quaternary structure, interacts (via LRR repeats) with BCL2 and BCL2L1 (via the loop between motifs BH4 and BH3); these interactions reduce NLRP1 inflammasome-induced CASP1 activation and IL1B release, possibly by impairing NLRP1 interaction with PYCARD. Interacts with NOD2; this interaction is enhanced in the presence of muramyl dipeptide (MDP) and increases IL1B release. Interacts with EIF2AK2/PKR; this interaction requires EIF2AK2 activity, is accompanied by EIF2AK2 autophosphorylation and promotes inflammasome assembly in response to danger-associated signals. Interacts with MEFV; this interaction targets NLRP1 to degradation by autophagy, hence preventing excessive IL1B- and IL18-mediated inflammation. Binds (via LRR domain) to dsDNA and dsRNA. Interacts with DPP9; leading to inhibit activation of the inflammasome. DPP9 acts via formation of a ternary complex, composed of a DPP9 homodimer, one full-length NLRP1 protein, and one cleaved C-terminus of NLRP1 (NACHT, LRR and PYD domains-containing protein 1, C-terminus). Interacts with DPP8; leading to inhibit activation of the inflammasome, probably via formation of a ternary complex with DPP8. Interacts with the C-terminal part of NLRP1 (NACHT, LRR and PYD domains-containing protein 1, C-terminus) in absence of pathogens and other damage-associated signals. In terms of assembly, interacts with the N-terminal part of NLRP1 (NACHT, LRR and PYD domains-containing protein 1, N-terminus) in absence of pathogens and other damage-associated signals. Homomultimer; forms the NLRP1 inflammasome polymeric complex, a filament composed of homopolymers of this form in response to pathogens and other damage-associated signals. The NLRP1 inflammasome polymeric complex associates with PYCARD/ASC. Interacts (via CARD domain) with PYCARD/ASC (via CARD domain); leading to pro-caspase-1 (proCASP1) recruitment. Pro-caspase-1 (proCASP1) filament formation increases local enzyme concentration, resulting in trans-autocleavage and activation. Active CASP1 then processes IL1B and IL18 precursors, leading to the release of mature cytokines in the extracellular milieu and inflammatory response. As to quaternary structure, (Microbial infection) Interacts with vaccinia virus protein F1. (Microbial infection) Interacts with human herpes virus 8/HHV-8 proteins ORF45; relieving autoinhibition of the NLRP1 inflammasome. In terms of processing, autocatalytically cleaved. Autocatalytic cleavage in FIIND region occurs constitutively, prior to activation signals, and is required for inflammasome activity (IL1B release), possibly by facilitating CASP1 binding. Both N- and C-terminal parts remain associated non-covalently. Post-translationally, ubiquitinated by the cullin:ZER1/ZYG11B complex in response to pathogen-associated signals, leading to its degradation by the proteasome and subsequent release of the cleaved C-terminal part of the protein (NACHT, LRR and PYD domains-containing protein 1, C-terminus), which polymerizes and forms the NLRP1 inflammasome. Phosphorylated by MAP3K20 isoform ZAKalpha, MAPK11 and MAPK14 in response to UV-B irradiation and ribosome collisions, promoting activation of the NLRP1 inflammasome and pyroptosis. In terms of processing, (Microbial infection) Cleaved between Gln-130 and Gly-131 by the Protease 3C from various human enteroviruses and rhinoviruses (EV68, EV71, Coxsackievirus B3, HRV-14 and HRV-16). This cleavage triggers N-glycine-mediated proteasomal degradation of the autoinhibitory NLRP1 N-terminal fragment via the cullin:ZER1/ZYG11B complex which liberates the activating C-terminal fragment and activates NLRP1 inflammasome. Post-translationally, (Microbial infection) Cleaved between Gln-333 and Gly-334 by the 3C-like proteinase nsp5 from human coronavirus SARS-CoV-2. This cleavage liberates the activating C-terminal fragment and activates NLRP1 inflammasome, leading to downstream activation of GSDME and lung epithelial cell death. Widely expressed. Abundantly expressed in primary immune cells (isoform 1 and isoform 2), including in neutrophils, monocytes/macrophages, dendritic cells (mostly Langerhans cells), and B- and T-lymphocytes (at protein level). Strongly expressed in epithelial cells lining the glandular epithelium, such as that of the gastrointestinal tract (stomach, small intestine, colon), the respiratory tract (trachea and bronchi), and the endometrial and endocervical glands, gallbladder, prostate, and breast (at protein level). In testis, expressed in spermatogonia and primary spermatocytes, but not in Sertoli cells (at protein level). In the brain, expressed in neurons, in particular in pyramidal ones and in oligodendrocytes, but not detected in microglia (at protein level). Expressed in adult and fetal ocular tissues, including in adult and 24-week old fetal choroid, sclera, cornea, and optic nerve, as well as in adult retina and fetal retina/retinal pigment epithelium. Highly expressed in the skin throughout the epidermis and in dermal fibroblasts, in both glabrous skin and plantar skin. It is detected in keratinocytes, but not in melanocytes. Expressed in epidermal appendages such as hair follicles.

It is found in the cytoplasm. It localises to the cytosol. The protein localises to the nucleus. Its subcellular location is the inflammasome. The catalysed reaction is ATP + H2O = ADP + phosphate + H(+). NLRP1 inflammasome is activated by cleavage by the Protease 3C from various human enteroviruses and rhinoviruses (EV68, EV71, Coxsackievirus B3, HRV-14 and HRV-16): cleavage promotes ubiquitination and degradation of the N-terminal part, releasing the cleaved C-terminal part of the protein (NACHT, LRR and PYD domains-containing protein 1, C-terminus), which polymerizes and forms the NLRP1 inflammasome. Activated double-stranded RNA: positive-strand RNA viruses such as Semliki forest virus and long dsRNA activate the NLRP1 inflammasome. In contrast to its mouse ortholog, not activated by Bacillus anthracis lethal toxin. NLRP1 inflammasome is inhibited by DPP8 and DPP9, which sequester the C-terminal fragment of NLRP1 (NACHT, LRR and PYD domains-containing protein 1, C-terminus) in a ternary complex, thereby preventing NLRP1 oligomerization and activation. NLRP1 inflammasome is activated by Val-boroPro (Talabostat, PT-100), an inhibitor of dipeptidyl peptidases DPP8 and DPP9. Val-boroPro relieves inhibition of DPP8 and/or DPP9 by promoting disruption of the ternary complex, releasing its C-terminal part from autoinhibition. ATPase activity is activated by dsRNA-binding but not dsDNA-binding. With respect to regulation, (Microbial infection) The NLRP1 inflammasome is activated by human herpes virus 8/HHV-8 protein ORF45, which interacts with the N-terminal part of NLRP1 and promotes its translocation into the nucleus, relieving autoinhibition and leading to activation. Its activity is regulated as follows. (Microbial infection) NLRP1 inflammasome is activated by cleavage by the 3C-like proteinase nsp5 from human coronavirus SARS-CoV-2. In terms of biological role, acts as the sensor component of the NLRP1 inflammasome, which mediates inflammasome activation in response to various pathogen-associated signals, leading to subsequent pyroptosis. Inflammasomes are supramolecular complexes that assemble in the cytosol in response to pathogens and other damage-associated signals and play critical roles in innate immunity and inflammation. Acts as a recognition receptor (PRR): recognizes specific pathogens and other damage-associated signals, such as cleavage by some human enteroviruses and rhinoviruses, double-stranded RNA, UV-B irradiation, or Val-boroPro inhibitor, and mediates the formation of the inflammasome polymeric complex composed of NLRP1, CASP1 and PYCARD/ASC. In response to pathogen-associated signals, the N-terminal part of NLRP1 is degraded by the proteasome, releasing the cleaved C-terminal part of the protein (NACHT, LRR and PYD domains-containing protein 1, C-terminus), which polymerizes and associates with PYCARD/ASC to initiate the formation of the inflammasome complex: the NLRP1 inflammasome recruits pro-caspase-1 (proCASP1) and promotes caspase-1 (CASP1) activation, which subsequently cleaves and activates inflammatory cytokines IL1B and IL18 and gasdermin-D (GSDMD), leading to pyroptosis. In the absence of GSDMD expression, the NLRP1 inflammasome is able to recruit and activate CASP8, leading to activation of gasdermin-E (GSDME). Activation of NLRP1 inflammasome is also required for HMGB1 secretion; the active cytokines and HMGB1 stimulate inflammatory responses. Binds ATP and shows ATPase activity. Plays an important role in antiviral immunity and inflammation in the human airway epithelium. Specifically recognizes a number of pathogen-associated signals: upon infection by human rhinoviruses 14 and 16 (HRV-14 and HRV-16), NLRP1 is cleaved and activated which triggers NLRP1-dependent inflammasome activation and IL18 secretion. Positive-strand RNA viruses, such as Semliki forest virus and long dsRNA activate the NLRP1 inflammasome, triggering IL1B release in a NLRP1-dependent fashion. Acts as a direct sensor for long dsRNA and thus RNA virus infection. May also be activated by muramyl dipeptide (MDP), a fragment of bacterial peptidoglycan, in a NOD2-dependent manner. The NLRP1 inflammasome is also activated in response to UV-B irradiation causing ribosome collisions: ribosome collisions cause phosphorylation and activation of NLRP1 in a MAP3K20-dependent manner, leading to pyroptosis. Functionally, constitutes the precursor of the NLRP1 inflammasome, which mediates autoproteolytic processing within the FIIND domain to generate the N-terminal and C-terminal parts, which are associated non-covalently in absence of pathogens and other damage-associated signals. Regulatory part that prevents formation of the NLRP1 inflammasome: in absence of pathogens and other damage-associated signals, interacts with the C-terminal part of NLRP1 (NACHT, LRR and PYD domains-containing protein 1, C-terminus), preventing activation of the NLRP1 inflammasome. In response to pathogen-associated signals, this part is ubiquitinated and degraded by the proteasome, releasing the cleaved C-terminal part of the protein, which polymerizes and forms the NLRP1 inflammasome. Its function is as follows. Constitutes the active part of the NLRP1 inflammasome. In absence of pathogens and other damage-associated signals, interacts with the N-terminal part of NLRP1 (NACHT, LRR and PYD domains-containing protein 1, N-terminus), preventing activation of the NLRP1 inflammasome. In response to pathogen-associated signals, the N-terminal part of NLRP1 is degraded by the proteasome, releasing this form, which polymerizes and associates with PYCARD/ASC to form of the NLRP1 inflammasome complex: the NLRP1 inflammasome complex then directly recruits pro-caspase-1 (proCASP1) and promotes caspase-1 (CASP1) activation, leading to gasdermin-D (GSDMD) cleavage and subsequent pyroptosis. In terms of biological role, it is unclear whether is involved in inflammasome formation. It is not cleaved within the FIIND domain, does not assemble into specks, nor promote IL1B release. However, in an vitro cell-free system, it has been shown to be activated by MDP. This is NACHT, LRR and PYD domains-containing protein 1 from Homo sapiens (Human).